The primary structure comprises 137 residues: MAKLKLTITTPSAIFYDDLVDIVTLRVNLGYKGFLPNASEFFSNIEPGTLTINYENSSDMIKCHIGSGLIYSNKESVNIITDDIVKIEDINLDALNKQKEMLENRLKENLRESLLKQVEEKLENINSRIKAYNEFKK.

It belongs to the ATPase epsilon chain family. F-type ATPases have 2 components, CF(1) - the catalytic core - and CF(0) - the membrane proton channel. CF(1) has five subunits: alpha(3), beta(3), gamma(1), delta(1), epsilon(1). CF(0) has three main subunits: a, b and c.

The protein resides in the cell membrane. Its function is as follows. Produces ATP from ADP in the presence of a proton gradient across the membrane. The chain is ATP synthase epsilon chain from Mycoplasmopsis synoviae (strain 53) (Mycoplasma synoviae).